The primary structure comprises 52 residues: Creatine kinase B-type (52 aa).

Positions 1 to 52 constitute a Phosphagen kinase C-terminal domain; it reads AKVLTLDLYKKLRDKSTPSGFTLDDIIQNEHLGYVLTCPSNLGTXLRAXVHV. Residues 1–52 form the Phosphagen kinase N-terminal domain; that stretch reads AKVLTLDLYKKLRDKSTPSGFTLDDIIQNEHLGYVLTCPSNLGTXLRAXVHV. Residues arginine 13 and arginine 47 each coordinate ATP.

It belongs to the ATP:guanido phosphotransferase family. As to quaternary structure, dimer of identical or non-identical chains, which can be either B (brain type) or M (muscle type). With MM being the major form in skeletal muscle and myocardium, MB existing in myocardium, and BB existing in many tissues, especially brain. As to expression, expressed in rectal gland, brain, skeletal muscle (at protein level).

The protein localises to the cytoplasm. The protein resides in the cytosol. It is found in the mitochondrion. It localises to the basal cell membrane. The enzyme catalyses creatine + ATP = N-phosphocreatine + ADP + H(+). Reversibly catalyzes the transfer of phosphate between ATP and various phosphogens (e.g. creatine phosphate). Creatine kinase isoenzymes play a central role in energy transduction in tissues with large, fluctuating energy demands, such as skeletal muscle, heart, brain and spermatozoa. This Squalus acanthias (Spiny dogfish) protein is Creatine kinase B-type.